A 494-amino-acid polypeptide reads, in one-letter code: 4-trimethylaminobutyraldehyde dehydrogenase (494 aa).

Ser2 is modified (N-acetylserine). N6-acetyllysine; alternate is present on Lys30. N6-succinyllysine; alternate is present on Lys30. An N6-succinyllysine modification is found at Lys59. Residues Lys180 and 232-236 (GSVPT) each bind NAD(+). Glu254 serves as the catalytic Proton acceptor. Cys288 serves as the catalytic Nucleophile. Lys298 carries the post-translational modification N6-acetyllysine. Lys303 carries the N6-acetyllysine; alternate modification. Position 303 is an N6-succinyllysine; alternate (Lys303). The residue at position 344 (Lys344) is an N6-acetyllysine. Glu391 contributes to the NAD(+) binding site.

This sequence belongs to the aldehyde dehydrogenase family. In terms of assembly, homotetramer.

It localises to the cytoplasm. The protein resides in the cytosol. The enzyme catalyses 4-(trimethylamino)butanal + NAD(+) + H2O = 4-(trimethylamino)butanoate + NADH + 2 H(+). The catalysed reaction is an aldehyde + NAD(+) + H2O = a carboxylate + NADH + 2 H(+). It carries out the reaction 4-aminobutanal + NAD(+) + H2O = 4-aminobutanoate + NADH + 2 H(+). It catalyses the reaction formaldehyde + NAD(+) + H2O = formate + NADH + 2 H(+). The enzyme catalyses acetaldehyde + NAD(+) + H2O = acetate + NADH + 2 H(+). The catalysed reaction is imidazole-4-acetaldehyde + NAD(+) + H2O = imidazole-4-acetate + NADH + 2 H(+). It carries out the reaction acrolein + NAD(+) + H2O = acrylate + NADH + 2 H(+). It catalyses the reaction (5-hydroxyindol-3-yl)acetaldehyde + NAD(+) + H2O = (5-hydroxyindol-3-yl)acetate + NADH + 2 H(+). The enzyme catalyses 3,4-dihydroxyphenylacetaldehyde + NAD(+) + H2O = 3,4-dihydroxyphenylacetate + NADH + 2 H(+). The catalysed reaction is spermine monoaldehyde + NAD(+) + H2O = N-(2-carboxyethyl)spermidine + NADH + 2 H(+). It carries out the reaction propanal + NAD(+) + H2O = propanoate + NADH + 2 H(+). It catalyses the reaction butanal + NAD(+) + H2O = butanoate + NADH + 2 H(+). The enzyme catalyses pentanal + NAD(+) + H2O = pentanoate + NADH + 2 H(+). The catalysed reaction is hexanal + NAD(+) + H2O = hexanoate + NADH + 2 H(+). It functions in the pathway amine and polyamine biosynthesis; carnitine biosynthesis. Its function is as follows. Converts gamma-trimethylaminobutyraldehyde into gamma-butyrobetaine with high efficiency (in vitro). Can catalyze the irreversible oxidation of a broad range of aldehydes to the corresponding acids in an NAD-dependent reaction, but with low efficiency. Catalyzes the oxidation of aldehydes arising from biogenic amines and polyamines. This Sus scrofa (Pig) protein is 4-trimethylaminobutyraldehyde dehydrogenase (ALDH9A1).